We begin with the raw amino-acid sequence, 103 residues long: Small ribosomal subunit protein uS10 (103 aa).

Belongs to the universal ribosomal protein uS10 family. Part of the 30S ribosomal subunit.

Its function is as follows. Involved in the binding of tRNA to the ribosomes. The sequence is that of Small ribosomal subunit protein uS10 from Borrelia recurrentis (strain A1).